Consider the following 206-residue polypeptide: Isopentenyl-diphosphate Delta-isomerase (206 aa).

The Mn(2+) site is built by His-44 and His-51. A Nudix hydrolase domain is found at 49 to 183 (ALHLAFSCHV…PWAFSPWLVL (135 aa)). Cys-86 is a catalytic residue. Residue Cys-86 participates in Mg(2+) binding. His-88 is a binding site for Mn(2+). Glu-106 lines the Mg(2+) pocket. Mn(2+)-binding residues include Glu-133 and Glu-135. Glu-135 is a catalytic residue.

This sequence belongs to the IPP isomerase type 1 family. The cofactor is Mg(2+). Requires Mn(2+) as cofactor.

It localises to the cytoplasm. It catalyses the reaction isopentenyl diphosphate = dimethylallyl diphosphate. Its pathway is isoprenoid biosynthesis; dimethylallyl diphosphate biosynthesis; dimethylallyl diphosphate from isopentenyl diphosphate: step 1/1. Catalyzes the 1,3-allylic rearrangement of the homoallylic substrate isopentenyl (IPP) to its highly electrophilic allylic isomer, dimethylallyl diphosphate (DMAPP). The chain is Isopentenyl-diphosphate Delta-isomerase from Agromyces mediolanus (Corynebacterium mediolanum).